The following is a 299-amino-acid chain: NAD kinase (299 aa).

Asp-71 acts as the Proton acceptor in catalysis. NAD(+)-binding positions include 71-72, 145-146, Arg-173, Asp-175, 186-191, Ala-210, and Gln-248; these read DG, ND, and TAYSLS.

Belongs to the NAD kinase family. A divalent metal cation serves as cofactor.

It localises to the cytoplasm. The catalysed reaction is NAD(+) + ATP = ADP + NADP(+) + H(+). Involved in the regulation of the intracellular balance of NAD and NADP, and is a key enzyme in the biosynthesis of NADP. Catalyzes specifically the phosphorylation on 2'-hydroxyl of the adenosine moiety of NAD to yield NADP. The polypeptide is NAD kinase (Bordetella bronchiseptica (strain ATCC BAA-588 / NCTC 13252 / RB50) (Alcaligenes bronchisepticus)).